We begin with the raw amino-acid sequence, 251 residues long: Capsid protein (251 aa).

The Bipartite nuclear localization signal signature appears at Lys-3–Asn-20. Residues Lys-35–Arg-49 carry the Nuclear localization signal motif. The segment at Cys-63–His-80 is a zinc-finger region. A Nuclear export signal motif is present at residues Ile-96–Met-117. Residues Lys-195 to Arg-242 carry the Bipartite nuclear localization signal motif.

The protein belongs to the geminiviridae capsid protein family. As to quaternary structure, homomultimer. Binds to single-stranded and double-stranded viral DNA. Interacts (via nuclear localization signals) with host importin alpha-1a.

The protein resides in the virion. It is found in the host nucleus. In terms of biological role, encapsidates the viral DNA into characteristic twinned ('geminate') particles. Binds the genomic viral ssDNA and shuttles it into and out of the cell nucleus. The CP of bipartite geminiviruses is not required for cell-to-cell or systemic movement. The protein is Capsid protein of Cabbage leaf curl virus (isolate Jamaica) (CaLCuV).